Here is a 346-residue protein sequence, read N- to C-terminus: GTP-binding RHO-like protein (346 aa).

A compositionally biased stretch (basic residues) spans Met1–Ser10. A disordered region spans residues Met1 to Glu25. Residues Pro16–Glu25 show a composition bias toward polar residues. Gly82 to Thr89 lines the GTP pocket. The Effector region signature appears at Tyr104 to Tyr112. Residues Asp130–Gln134 and Thr188–Asp191 contribute to the GTP site. The interval Leu259–Asp294 is disordered. The residue at position 343 (Cys343) is a Cysteine methyl ester. A lipid anchor (S-geranylgeranyl cysteine) is attached at Cys343. The propeptide at Val344–Leu346 is removed in mature form.

Belongs to the small GTPase superfamily. Rho family.

Its subcellular location is the cell membrane. This is GTP-binding RHO-like protein (CRL1) from Candida albicans (strain WO-1) (Yeast).